The sequence spans 610 residues: UvrABC system protein C (610 aa).

In terms of domain architecture, GIY-YIG spans 16–94 (SQPGVYRMYD…IKLYQPRYNV (79 aa)). A UVR domain is found at 204–239 (DQVLTQLIARMEKASQDLAFEEAARIRDQIQAVRRV).

It belongs to the UvrC family. As to quaternary structure, interacts with UvrB in an incision complex.

Its subcellular location is the cytoplasm. Functionally, the UvrABC repair system catalyzes the recognition and processing of DNA lesions. UvrC both incises the 5' and 3' sides of the lesion. The N-terminal half is responsible for the 3' incision and the C-terminal half is responsible for the 5' incision. The sequence is that of UvrABC system protein C from Salmonella schwarzengrund (strain CVM19633).